Consider the following 340-residue polypeptide: Phenylalanine--tRNA ligase alpha subunit (340 aa).

Glu-255 contacts Mg(2+).

It belongs to the class-II aminoacyl-tRNA synthetase family. Phe-tRNA synthetase alpha subunit type 1 subfamily. Tetramer of two alpha and two beta subunits. Requires Mg(2+) as cofactor.

It is found in the cytoplasm. The enzyme catalyses tRNA(Phe) + L-phenylalanine + ATP = L-phenylalanyl-tRNA(Phe) + AMP + diphosphate + H(+). This Exiguobacterium sp. (strain ATCC BAA-1283 / AT1b) protein is Phenylalanine--tRNA ligase alpha subunit.